The sequence spans 232 residues: tRNA (guanine-N(7)-)-methyltransferase (232 aa).

S-adenosyl-L-methionine contacts are provided by Glu63, Glu88, Asp115, and Asp137. The active site involves Asp137. Substrate-binding positions include Lys141, Asp173, and 211–214 (TRYE).

This sequence belongs to the class I-like SAM-binding methyltransferase superfamily. TrmB family.

It catalyses the reaction guanosine(46) in tRNA + S-adenosyl-L-methionine = N(7)-methylguanosine(46) in tRNA + S-adenosyl-L-homocysteine. It functions in the pathway tRNA modification; N(7)-methylguanine-tRNA biosynthesis. Functionally, catalyzes the formation of N(7)-methylguanine at position 46 (m7G46) in tRNA. The protein is tRNA (guanine-N(7)-)-methyltransferase of Agrobacterium fabrum (strain C58 / ATCC 33970) (Agrobacterium tumefaciens (strain C58)).